Reading from the N-terminus, the 95-residue chain is Acylphosphatase (95 aa).

Residues Arg-8–Arg-95 enclose the Acylphosphatase-like domain. Residues Arg-23 and Asn-41 contribute to the active site.

Belongs to the acylphosphatase family.

The catalysed reaction is an acyl phosphate + H2O = a carboxylate + phosphate + H(+). This is Acylphosphatase (acyP) from Salinibacter ruber (strain DSM 13855 / M31).